The sequence spans 835 residues: BCL11 transcription factor A (835 aa).

Residues 1–12 (MSRRKQGKPQHL) show a composition bias toward basic residues. Residues 1–41 (MSRRKQGKPQHLSKREFSPEPLEAILTDDEPDHGPLGAPEG) are disordered. The interval 1 to 210 (MSRRKQGKPQ…SEHGSPLTPR (210 aa)) is required for nuclear body formation and for SUMO1 recruitment. Residues 45-71 (LLTCGQCQMNFPLGDILIFIEHKRKQC) form a C2HC-type zinc finger. Residues C48, C51, H66, and C71 each coordinate Zn(2+). S86 carries the post-translational modification Phosphoserine. A Glycyl lysine isopeptide (Lys-Gly) (interchain with G-Cter in SUMO2) cross-link involves residue K123. I162 carries the phosphothreonine modification. A Glycyl lysine isopeptide (Lys-Gly) (interchain with G-Cter in SUMO2) cross-link involves residue K164. Residues 170 to 193 (YTCTTCKQPFTSAWFLLQHAQNTH) form a C2H2-type 1 zinc finger. S205 carries the post-translational modification Phosphoserine. P214 is modified (phosphothreonine). R271 carries the asymmetric dimethylarginine modification. A disordered region spans residues 323-376 (AGNTSSPPLSPGRPSPMQRLLQPFQPGSKPPFLATPPLPPLQSAPPPSQPPVKS). Phosphoserine occurs at positions 332 and 337. The segment covering 355–372 (LATPPLPPLQSAPPPSQP) has biased composition (pro residues). C2H2-type zinc fingers lie at residues 377–399 (KSCE…RRSH) and 405–429 (YKCN…THMH). The segment covering 421-430 (KRHMKTHMHK) has biased composition (basic residues). Disordered stretches follow at residues 421 to 458 (KRHM…LVGS), 471 to 512 (KSEN…ERVD), and 572 to 619 (RSHL…GLSK). Positions 441 to 450 (GLSTASSPEP) are enriched in polar residues. A phosphoserine mark is found at S446 and S447. The segment covering 482 to 506 (NGDEEEEEDDEEEEEEEEEEEEELT) has biased composition (acidic residues). Residues 574-584 (HLAEAEGHRDT) show a composition bias toward basic and acidic residues. Position 608 is a phosphoserine (S608). K620 participates in a covalent cross-link: Glycyl lysine isopeptide (Lys-Gly) (interchain with G-Cter in SUMO2). S625 and S630 each carry phosphoserine. A Glycyl lysine isopeptide (Lys-Gly) (interchain with G-Cter in SUMO1) cross-link involves residue K634. A compositionally biased stretch (low complexity) spans 682 to 696 (SPFASSSEHSSENGS). Phosphothreonine is present on T701. Over residues 706 to 720 (LDGGISGRSGTGSGG) the composition is skewed to gly residues. Residues 737-835 (EGRRSDTCEY…RVLNNDIKTE (99 aa)) form a DNA-binding region. The C2H2-type 4 zinc finger occupies 742–764 (DTCEYCGKVFKNCSNLTVHRRSH). 4 residues coordinate Zn(2+): C744, C747, H760, and H764. The span at 764–773 (HTGERPYKCE) shows a compositional bias: polar residues. The segment at 765–769 (TGERP) is disordered. A C2H2-type 5 zinc finger spans residues 770–792 (YKCELCNYACAQSSKLTRHMKTH). C772, C775, H788, and H792 together coordinate Zn(2+). Residues 793–799 (GQVGKDV) form a disordered region. Residues 800–823 (YKCEICKMPFSVYSTLEKHMKKWH) form a C2H2-type 6 zinc finger. C802, C805, H818, and H823 together coordinate Zn(2+).

In terms of assembly, homotetrameric; self-associates via C2HC-type zinc finger domain. Interacts with MTA2, a component of the nucleosome remodeling and deacetylase (NuRD) repressor complex. Interacts with NR2F1, PIAS3, NR2F2 and NR2F6. Interacts with TBR1. In terms of processing, sumoylated with SUMO1. Isoforms are expressed in a tissue-specific fashion. Isoforms 1, isoform 2, and isoform 3 are expressed at similar levels in testis, kidney and spleen. Isoform 1 is expressed in the stomach, and isoform 2 is expressed exclusively in the lung. Overexpression following proviral integration in hematopoietic cells results in the generation of myeloid leukemia.

Its subcellular location is the cytoplasm. The protein resides in the nucleus. Functionally, transcription factor. Associated with the BAF SWI/SNF chromatin remodeling complex. Binds to the 5'-TGACCA-3' sequence motif in regulatory regions of target genes. Involved in brain development. May play a role in hematopoiesis. Essential factor in lymphopoiesis, required for B-cell formation in fetal liver. May function as a modulator of the transcriptional repression activity of NR2F2. This chain is BCL11 transcription factor A (Bcl11a), found in Mus musculus (Mouse).